Consider the following 421-residue polypeptide: Tol-Pal system protein TolA (421 aa).

The Cytoplasmic portion of the chain corresponds to 1–13 (MSKATEQNDKLKR). The chain crosses the membrane as a helical span at residues 14–34 (AIIISAVLHVILFAALIWSSF). Over 35–421 (DENIEASAGG…FKNAPLDFKP (387 aa)) the chain is Periplasmic. The interval 48 to 310 (SSIDAVMVDS…LSSGKNAPKT (263 aa)) is domain II (alpha-helical). The interval 65–266 (KRMQSQESSA…KAAADKKAAA (202 aa)) is disordered. Basic and acidic residues-rich tracts occupy residues 73–175 (SAKR…EAEA) and 206–266 (EARK…KAAA). Repeat copies occupy residues 224 to 229 (EKKAAA), 230 to 234 (EKAAA), 235 to 240 (DKKAAA), 241 to 245 (EKAAA), 246 to 250 (DKKAA), 251 to 255 (EKAAA), 256 to 260 (EKAAA), 261 to 266 (DKKAAA), 267 to 271 (EKAAA), 272 to 277 (DKKAAA), 278 to 282 (AKAAA), 283 to 287 (EKAAA), and 288 to 292 (AKAAA). Positions 224–292 (EKKAAAEKAA…EKAAAAKAAA (69 aa)) are 13 X tandem repeats of [EDA]-K(1,2)-A(2,4). Residues 300 to 336 (ELSSGKNAPKTGGGAKGNNASPAGSGNTKNNGASGAD) form a disordered region. A domain III (functional) region spans residues 311–421 (GGGAKGNNAS…FKNAPLDFKP (111 aa)). The span at 317–332 (NNASPAGSGNTKNNGA) shows a compositional bias: polar residues. A disulfide bridge connects residues cysteine 363 and cysteine 388.

The protein belongs to the TolA family. The Tol-Pal system is composed of five core proteins: the inner membrane proteins TolA, TolQ and TolR, the periplasmic protein TolB and the outer membrane protein Pal. They form a network linking the inner and outer membranes and the peptidoglycan layer. TolA interacts with TolQ and TolR via its N-terminal domain. Interacts with CpoB, and with the trimeric porins OmpC, OmpF, PhoE and LamB via its central domain. Interacts with TolB via its C-terminal domain. Also interacts with Pal via its C-terminal domain. This interaction is proton motive force dependent and requires TolQ and TolR.

The protein localises to the cell inner membrane. In terms of biological role, part of the Tol-Pal system, which plays a role in outer membrane invagination during cell division and is important for maintaining outer membrane integrity. The Tol-Pal system is also required for polar localization of chemoreceptors clusters. The system also appears to be required for the activity of several outer membrane-localized enzymes with cell wall remodeling activity. Is involved in the uptake of group A colicins (colicins A, E1, E2, E3, and K) and in the uptake of filamentous phage DNA. The chain is Tol-Pal system protein TolA from Escherichia coli (strain K12).